A 40-amino-acid chain; its full sequence is Dermonecrotic toxin LgSicTox-alphaI-1 (40 aa).

Residues glutamate 32 and aspartate 34 each coordinate Mg(2+).

This sequence belongs to the arthropod phospholipase D family. Class II subfamily. It depends on Mg(2+) as a cofactor. Contains 2 disulfide bonds. Expressed by the venom gland.

It is found in the secreted. It catalyses the reaction an N-(acyl)-sphingosylphosphocholine = an N-(acyl)-sphingosyl-1,3-cyclic phosphate + choline. The enzyme catalyses an N-(acyl)-sphingosylphosphoethanolamine = an N-(acyl)-sphingosyl-1,3-cyclic phosphate + ethanolamine. It carries out the reaction a 1-acyl-sn-glycero-3-phosphocholine = a 1-acyl-sn-glycero-2,3-cyclic phosphate + choline. The catalysed reaction is a 1-acyl-sn-glycero-3-phosphoethanolamine = a 1-acyl-sn-glycero-2,3-cyclic phosphate + ethanolamine. Its function is as follows. Dermonecrotic toxins cleave the phosphodiester linkage between the phosphate and headgroup of certain phospholipids (sphingolipid and lysolipid substrates), forming an alcohol (often choline) and a cyclic phosphate. This toxin acts on sphingomyelin (SM). It may also act on ceramide phosphoethanolamine (CPE), lysophosphatidylcholine (LPC) and lysophosphatidylethanolamine (LPE), but not on lysophosphatidylserine (LPS), and lysophosphatidylglycerol (LPG). It acts by transphosphatidylation, releasing exclusively cyclic phosphate products as second products. In vivo, intradermal injection induces dermonecrosis. Induces, hemolysis, vascular permeability, edema, inflammatory response, and platelet aggregation. The protein is Dermonecrotic toxin LgSicTox-alphaI-1 of Loxosceles gaucho (Spider).